The sequence spans 1321 residues: Bile salt export pump (1321 aa).

Over 1–62 (MSDSVILRSI…FSSSTDIWLM (62 aa)) the chain is Cytoplasmic. The interval 16-37 (ENDGFESDKSYNNDKKSRLQDE) is disordered. Over residues 21 to 37 (ESDKSYNNDKKSRLQDE) the composition is skewed to basic and acidic residues. Positions 62–385 (MFVGSLCAFL…ASPCLEAFAT (324 aa)) constitute an ABC transmembrane type-1 1 domain. The chain crosses the membrane as a helical span at residues 63–83 (FVGSLCAFLHGIAQPGVLLIF). Topologically, residues 84-147 (GTMTDVFIDY…MIKFASYYAG (64 aa)) are extracellular. N-linked (GlcNAc...) asparagine glycans are attached at residues Asn-109, Asn-116, Asn-122, and Asn-125. The helical transmembrane segment at 148–168 (IAVAVLITGYIQICFWVIAAA) threads the bilayer. Topologically, residues 169–215 (RQIQKMRKFYFRRIMRMEIGWFDCNSVGELNTRFSDDINKINDAIAD) are cytoplasmic. A helical membrane pass occupies residues 216–236 (QMALFIQRMTSTICGFLLGFF). Topologically, residues 237-240 (RGWK) are extracellular. Residues 241-261 (LTLVIISVSPLIGIGAATIGL) traverse the membrane as a helical segment. The Cytoplasmic segment spans residues 262 to 319 (SVSKFTDYELKAYAKAGVVADEVISSMRTVAAFGGEKREVERYEKNLVFAQRWGIRKG). A helical membrane pass occupies residues 320–340 (IVMGFFTGFVWCLIFLCYALA). The Extracellular portion of the chain corresponds to 341-353 (FWYGSTLVLDEGE). A helical transmembrane segment spans residues 354 to 374 (YTPGTLVQIFLSVIVGALNLG). Residues 375–755 (NASPCLEAFA…KFSAPEWPYM (381 aa)) lie on the Cytoplasmic side of the membrane. The 237-residue stretch at 420 to 656 (IEFHNVTFHY…KGVYFTLVTL (237 aa)) folds into the ABC transporter 1 domain. 455 to 462 (GPSGAGKS) contributes to the ATP binding site. Thr-586 carries the post-translational modification Phosphothreonine. Ser-587 carries the phosphoserine modification. Residues 651–672 (FTLVTLQSQGNQALNEEDIKDA) form an interaction with HAX1 region. Ser-690, Ser-701, and Ser-704 each carry phosphoserine. The ABC transmembrane type-1 2 domain occupies 755–1043 (MLVGSVGAAV…AFSYTPSYAK (289 aa)). Residues 756-776 (LVGSVGAAVNGTVTPLYAFLF) form a helical membrane-spanning segment. At 777-794 (SQILGTFSIPDKEEQRSQ) the chain is on the extracellular side. A helical transmembrane segment spans residues 795–815 (INGVCLLFVAMGCVSLFTQFL). The Cytoplasmic portion of the chain corresponds to 816-869 (QGYAFAKSGELLTKRLRKFGFRAMLGQDIAWFDDLRNSPGALTTRLATDASQVQ). 2 helical membrane passes run 870 to 890 (GAAG…TVAM) and 891 to 911 (IIAF…FPFL). Topologically, residues 912–979 (ALSGATQTRM…PFKTAIQKAN (68 aa)) are cytoplasmic. The helical transmembrane segment at 980-1000 (IYGFCFAFAQCIMFIANSASY) threads the bilayer. Residues 1001–1011 (RYGGYLISNEG) lie on the Extracellular side of the membrane. A helical membrane pass occupies residues 1012 to 1032 (LHFSYVFRVISAVVLSATALG). The Cytoplasmic portion of the chain corresponds to 1033–1321 (RAFSYTPSYA…KLVTTGSPIS (289 aa)). Residues 1078 to 1316 (IDFVDCKFTY…KGAYYKLVTT (239 aa)) form the ABC transporter 2 domain. 1113-1120 (GSSGCGKS) contacts ATP. Ser-1214 is subject to Phosphoserine. The interval 1311–1314 (YKLV) is mediates internalization from the plasma membrane. Phosphoserine is present on Ser-1321.

It belongs to the ABC transporter superfamily. ABCB family. Multidrug resistance exporter (TC 3.A.1.201) subfamily. In terms of assembly, interacts with HAX1. Interacts with the adapter protein complex 2 (AP-2) throught AP2A2 or AP2A1; this interaction regulates cell membrane expression of ABCB11 through its internalization in a clathrin-dependent manner and its subsequent degradation. In terms of processing, N-glycosylated. Ubiquitinated; short-chain ubiquitination regulates cell-Surface expression of ABCB11. As to expression, expressed predominantly, if not exclusively in the liver, where it was further localized to the canalicular microvilli and to subcanalicular vesicles of the hepatocytes by in situ.

It is found in the apical cell membrane. Its subcellular location is the recycling endosome membrane. It localises to the endosome. The protein resides in the cell membrane. The catalysed reaction is cholate(in) + ATP + H2O = cholate(out) + ADP + phosphate + H(+). The enzyme catalyses taurocholate(in) + ATP + H2O = taurocholate(out) + ADP + phosphate + H(+). It catalyses the reaction glycocholate(in) + ATP + H2O = glycocholate(out) + ADP + phosphate + H(+). It carries out the reaction glycochenodeoxycholate(in) + ATP + H2O = glycochenodeoxycholate(out) + ADP + phosphate + H(+). The catalysed reaction is taurochenodeoxycholate(in) + ATP + H2O = taurochenodeoxycholate(out) + ADP + phosphate + H(+). The enzyme catalyses glycoursodeoxycholate(in) + ATP + H2O = glycoursodeoxycholate(out) + ADP + phosphate + H(+). It catalyses the reaction tauroursodeoxycholate(in) + ATP + H2O = tauroursodeoxycholate(out) + ADP + phosphate + H(+). It carries out the reaction taurodeoxycholate(in) + ATP + H2O = taurodeoxycholate(out) + ADP + phosphate + H(+). The catalysed reaction is taurolithocholate 3-sulfate(in) + ATP + H2O = taurolithocholate 3-sulfate(out) + ADP + phosphate + H(+). The enzyme catalyses pravastatin(in) + ATP + H2O = pravastatin(out) + ADP + phosphate + H(+). With respect to regulation, the uptake of taurocholate is inhibited by taurolithocholate sulfate with an IC(50) of 9 uM. Pravastatin competitively inhibits the transport of taurocholic acid. Cyclosporin A, glibenclamide, rifampicin and troglitazonestrongly competitively inhibit the transport activity of taurocholate. The canalicular transport activity of taurocholate is strongly dependent on canalicular membrane cholesterol content. The uptake of taurocholate is increased by short- and medium-chain fatty acids. Cholesterol increases transport capacity of taurocholate without affecting the affinity for the substrate. Catalyzes the transport of the major hydrophobic bile salts, such as taurine and glycine-conjugated cholic acid across the canalicular membrane of hepatocytes in an ATP-dependent manner, therefore participates in hepatic bile acid homeostasis and consequently to lipid homeostasis through regulation of biliary lipid secretion in a bile salts dependent manner. Transports taurine-conjugated bile salts more rapidly than glycine-conjugated bile salts. Also transports non-bile acid compounds, such as pravastatin and fexofenadine in an ATP-dependent manner and may be involved in their biliary excretion. This Homo sapiens (Human) protein is Bile salt export pump.